A 340-amino-acid chain; its full sequence is Methionyl-tRNA formyltransferase (340 aa).

Residue 110–113 coordinates (6S)-5,6,7,8-tetrahydrofolate; it reads SLLP.

The protein belongs to the Fmt family.

It catalyses the reaction L-methionyl-tRNA(fMet) + (6R)-10-formyltetrahydrofolate = N-formyl-L-methionyl-tRNA(fMet) + (6S)-5,6,7,8-tetrahydrofolate + H(+). In terms of biological role, attaches a formyl group to the free amino group of methionyl-tRNA(fMet). The formyl group appears to play a dual role in the initiator identity of N-formylmethionyl-tRNA by promoting its recognition by IF2 and preventing the misappropriation of this tRNA by the elongation apparatus. The chain is Methionyl-tRNA formyltransferase from Synechococcus sp. (strain WH7803).